The sequence spans 104 residues: Large ribosomal subunit protein bL21 (104 aa).

Belongs to the bacterial ribosomal protein bL21 family. As to quaternary structure, part of the 50S ribosomal subunit. Contacts protein L20.

Its function is as follows. This protein binds to 23S rRNA in the presence of protein L20. The polypeptide is Large ribosomal subunit protein bL21 (Endomicrobium trichonymphae).